The primary structure comprises 358 residues: MTLPSPPMSLLAELTHRCPLSCPYCSNPLELERKAAELDTATWTAVLEQAAELGVLQVHFSGGEPMARPDLVELVSVARRLNLYSNLITSGVLLDEPKLEALDRAGLDHIQLSFQDVTEAGAERIGGLKGAQARKVAAARLIRASGIPMTLNFVVHRENVARIPEMFALARELGAGRVEIAHTQYYGWGLKNREALLPSRDQLEESTRAVEAERAKGGLSVDYVTPDYHADRPKPCMGGWGQRFVNVTPSGRVLPCHAAEIIPDVAFPNVQDVTLSEIWNISPLFNMFRGTDWMPEPCRSCERKERDWGGCRCQAMALTGNAANTDPVCSLSPYHDRVEQAVENNMQPESTLFYRRYT.

The region spanning Pro4–Leu219 is the Radical SAM core domain. [4Fe-4S] cluster is bound by residues Cys18, Cys22, and Cys25.

The protein belongs to the radical SAM superfamily. PqqE family. As to quaternary structure, interacts with PqqD. The interaction is necessary for activity of PqqE. [4Fe-4S] cluster serves as cofactor.

The catalysed reaction is [PQQ precursor protein] + S-adenosyl-L-methionine = E-Y cross-linked-[PQQ precursor protein] + 5'-deoxyadenosine + L-methionine + H(+). The protein operates within cofactor biosynthesis; pyrroloquinoline quinone biosynthesis. Its function is as follows. Catalyzes the cross-linking of a glutamate residue and a tyrosine residue in the PqqA protein as part of the biosynthesis of pyrroloquinoline quinone (PQQ). This Gluconobacter oxydans (strain 621H) (Gluconobacter suboxydans) protein is PqqA peptide cyclase.